Consider the following 422-residue polypeptide: GTPase Obg (422 aa).

In terms of domain architecture, Obg spans 2–157 (AKFIDEIKLT…YLAHIVLKVM (156 aa)). Residues 158–325 (SDVGIIGKPS…LKGKIWKILE (168 aa)) form the OBG-type G domain. Residues 164-171 (GKPSAGKS), 189-193 (FTTLV), 210-213 (DLPG), 279-282 (NKSD), and 306-308 (SAI) contribute to the GTP site. Mg(2+) contacts are provided by S171 and T191. Positions 334-420 (EEEETEENVE…ILDYEFEWDG (87 aa)) constitute an OCT domain.

The protein belongs to the TRAFAC class OBG-HflX-like GTPase superfamily. OBG GTPase family. As to quaternary structure, monomer. Requires Mg(2+) as cofactor.

It localises to the cytoplasm. Its function is as follows. An essential GTPase which binds GTP, GDP and possibly (p)ppGpp with moderate affinity, with high nucleotide exchange rates and a fairly low GTP hydrolysis rate. Plays a role in control of the cell cycle, stress response, ribosome biogenesis and in those bacteria that undergo differentiation, in morphogenesis control. This is GTPase Obg from Mycoplasmopsis agalactiae (strain NCTC 10123 / CIP 59.7 / PG2) (Mycoplasma agalactiae).